The primary structure comprises 199 residues: Imidazoleglycerol-phosphate dehydratase (199 aa).

Belongs to the imidazoleglycerol-phosphate dehydratase family.

It localises to the cytoplasm. It carries out the reaction D-erythro-1-(imidazol-4-yl)glycerol 3-phosphate = 3-(imidazol-4-yl)-2-oxopropyl phosphate + H2O. It functions in the pathway amino-acid biosynthesis; L-histidine biosynthesis; L-histidine from 5-phospho-alpha-D-ribose 1-diphosphate: step 6/9. The sequence is that of Imidazoleglycerol-phosphate dehydratase from Desulfotalea psychrophila (strain LSv54 / DSM 12343).